The following is a 261-amino-acid chain: Small ribosomal subunit protein uS3 (261 aa).

The KH type-2 domain maps to Val-39–Arg-107. The interval Gln-213–Ala-261 is disordered. Residues Ala-221–Lys-254 are compositionally biased toward basic and acidic residues.

Belongs to the universal ribosomal protein uS3 family. In terms of assembly, part of the 30S ribosomal subunit. Forms a tight complex with proteins S10 and S14.

Binds the lower part of the 30S subunit head. Binds mRNA in the 70S ribosome, positioning it for translation. This chain is Small ribosomal subunit protein uS3, found in Dechloromonas aromatica (strain RCB).